The chain runs to 557 residues: Carbamoyl phosphate synthase large chain, N-terminal section (557 aa).

Residues 1–402 (MPKRTDIKKI…ALLKAVRSLE (402 aa)) are carboxyphosphate synthetic domain. Positions 129, 169, 175, 176, 208, 210, 215, 241, 242, 243, 285, and 299 each coordinate ATP. The region spanning 133 to 328 (KETMESIGLK…IAKVAAKLAV (196 aa)) is the ATP-grasp domain. Residues Gln-285, Glu-299, and Asn-301 each coordinate Mg(2+). 3 residues coordinate Mn(2+): Gln-285, Glu-299, and Asn-301. Residues 403–553 (LDRYGLAFPK…PYYTVDGQEI (151 aa)) are oligomerization domain.

This sequence belongs to the CarB family. In terms of assembly, composed of two chains; the small (or glutamine) chain promotes the hydrolysis of glutamine to ammonia, which is used by the large (or ammonia) chain to synthesize carbamoyl phosphate. Tetramer of heterodimers (alpha,beta)4. Mg(2+) is required as a cofactor. It depends on Mn(2+) as a cofactor.

It carries out the reaction hydrogencarbonate + L-glutamine + 2 ATP + H2O = carbamoyl phosphate + L-glutamate + 2 ADP + phosphate + 2 H(+). It catalyses the reaction hydrogencarbonate + NH4(+) + 2 ATP = carbamoyl phosphate + 2 ADP + phosphate + 2 H(+). Its pathway is amino-acid biosynthesis; L-arginine biosynthesis; carbamoyl phosphate from bicarbonate: step 1/1. It functions in the pathway pyrimidine metabolism; UMP biosynthesis via de novo pathway; (S)-dihydroorotate from bicarbonate: step 1/3. Its function is as follows. Large subunit of the glutamine-dependent carbamoyl phosphate synthetase (CPSase). CPSase catalyzes the formation of carbamoyl phosphate from the ammonia moiety of glutamine, carbonate, and phosphate donated by ATP, constituting the first step of 2 biosynthetic pathways, one leading to arginine and/or urea and the other to pyrimidine nucleotides. The large subunit (synthetase) binds the substrates ammonia (free or transferred from glutamine from the small subunit), hydrogencarbonate and ATP and carries out an ATP-coupled ligase reaction, activating hydrogencarbonate by forming carboxy phosphate which reacts with ammonia to form carbamoyl phosphate. In Aquifex aeolicus (strain VF5), this protein is Carbamoyl phosphate synthase large chain, N-terminal section (carB1).